The chain runs to 924 residues: LPS-assembly protein LptD (924 aa).

The N-terminal stretch at 1-33 (MAVKSLVFRRKFPLLVTGSLLALQPVAALTVQA) is a signal peptide. Residues 58-102 (NLPPRPAHTATSVSTAAAGSSVSGSGGETVEAEPTQRLVTESGGR) form a disordered region. A compositionally biased stretch (low complexity) spans 66 to 90 (TATSVSTAAAGSSVSGSGGETVEAE).

It belongs to the LptD family. As to quaternary structure, component of the lipopolysaccharide transport and assembly complex. Interacts with LptE and LptA.

The protein resides in the cell outer membrane. In terms of biological role, together with LptE, is involved in the assembly of lipopolysaccharide (LPS) at the surface of the outer membrane. The protein is LPS-assembly protein LptD of Pseudomonas aeruginosa (strain UCBPP-PA14).